The sequence spans 111 residues: MKSLLFTLAVFMLLAQLVSGNWYVKKCLNDVGICKKKCKPEEMHVKNGWAMCGKQRDCCVPADRRANYPAFCVQTKTTRTSTVTATTATTTLMMTTASMSLMAPTPVSPTG.

An N-terminal signal peptide occupies residues 1–20 (MKSLLFTLAVFMLLAQLVSG). Residues 21-63 (NWYVKKCLNDVGICKKKCKPEEMHVKNGWAMCGKQRDCCVPAD) are in vitro binds to LPS, mediates antimicrobial activity and inhibits LPS-mediated inflammation. 3 disulfide bridges follow: Cys27/Cys58, Cys34/Cys52, and Cys38/Cys59.

This sequence belongs to the beta-defensin family. In terms of assembly, homodimer or homooligomer; disulfide-linked. In terms of processing, O-glycosylated; glycans contain alpha(2,3)-linked sialic acids.

It localises to the secreted. Its function is as follows. Highly glycosylated atypical beta-defensin involved in several aspects of sperm function. Facilitates sperm transport in the female reproductive tract and contributes to sperm protection against immunodetection; both functions are probably implicating the negative surface charge provided by its O-linked oligosaccharides in the sperm glycocalyx. Involved in binding of sperm to oviductal epithelial cells to form a sperm reservoir until ovulation. Release from the sperm surface during capacitation and ovaluation by an elevation of oviductal fluid pH is unmasking other surface components and allows sperm to penetrate the cumulus matrix and bind to the zona pellucida of the oocyte. In vitro has antimicrobial activity and may inhibit LPS-mediated inflammation. In Gorilla gorilla gorilla (Western lowland gorilla), this protein is Beta-defensin 126 (DEFB126).